Here is a 926-residue protein sequence, read N- to C-terminus: Alpha-L-rhamnosidase (926 aa).

Residues 1–25 (MILHKSVFKSYIYVLTYFVFFSVMS) form the signal peptide. The N-palmitoyl cysteine moiety is linked to residue Cys26. Cys26 carries S-diacylglycerol cysteine lipidation. Alpha-L-rhamnose contacts are provided by residues Asp504, 508–510 (RDE), Asp517, and Trp569. The active-site Proton donor is the Glu510. Residue Glu779 is the Proton acceptor of the active site. His800 contributes to the alpha-L-rhamnose binding site.

It belongs to the glycosyl hydrolase 78 family.

It localises to the cell membrane. It carries out the reaction Hydrolysis of terminal non-reducing alpha-L-rhamnose residues in alpha-L-rhamnosides.. Alpha-L-rhamnosidase involved in ulvan degradation. Ulvan is the main polysaccharide component of the Ulvales (green seaweed) cell wall. It is composed of disaccharide building blocks comprising 3-sulfated rhamnose (Rha3S) linked to D-glucuronic acid (GlcA), L-iduronic acid (IduA), or D-xylose (Xyl). Alpha-L-rhamnosidase converts Rha-Xyl-Rha3S, the product of a sulfatase acting on Rha3S-Xyl-Rha3S oligosaccharides, to Rha and Xyl-Rha3S. The enzyme is able to degrade p-nitrophenyl-alpha-L-rhamnopyranoside (PNP-Rha) in vitro. The chain is Alpha-L-rhamnosidase from Formosa agariphila (strain DSM 15362 / KCTC 12365 / LMG 23005 / KMM 3901 / M-2Alg 35-1).